Reading from the N-terminus, the 420-residue chain is MMIQLIATPSNALVDEPVSIRATGLPPSQIVTIKATVKDENDNVFQSQAFYKTNEAGEVDLEKTPALGGDYVGVHPMGLFFSLKPKKAFHRLMKKDVMNSPLCICLDLYDSVNWLETVRIPSKASQRVQRWFVGPGVKREQIQEGRVRGALFLPPGKGPFPGIIDLFGLIGGLVEFRASLLASHGFAVLALAYFAYEDLPEKPQEVDLEYFEEAANFLLSHPKIQQPGIGVISTSKGAEIGLAMACYLKQVIATVCINGPTTITIFPLRYQDLVMTPIHPALERIQVHDSGALLFRYTTQYLHNKLNSQNILPVEKAQGKILFIVGENDECLDSKLHAQKAMDRLQRHGRSSGRMLAYPGAGHLIEPPYSPVCFVAWFPVLGQPMCFGGDLMAHAAAQEHSWREIQKFFRKHLLQSGSKL.

Residues Ser-235, Asp-329, and His-363 each act as charge relay system in the active site. The short motif at 418–420 (SKL) is the Microbody targeting signal element.

It belongs to the C/M/P thioester hydrolase family.

It is found in the peroxisome. In terms of biological role, acyltransferase which efficiently conjugates very long-chain and long-chain fatty acids to taurine. Shows no conjugation activity in the presence of glycine. The chain is Acyl-coenzyme A amino acid N-acyltransferase 2 from Mus musculus (Mouse).